The following is a 791-amino-acid chain: Genome polyprotein (791 aa).

Positions 1–15 (MNNQRKKTGRPSFNM) are interaction with host EXOC1. The Cytoplasmic segment spans residues 1–101 (MNNQRKKTGR…LNIMNRRKRS (101 aa)). Residues 37-72 (LLSGQGPMKLVMAFIAFLRFLAIPPTAGILARWSSF) are hydrophobic; homodimerization of capsid protein C. Residues 101-114 (SVTMLLMLLPTALA) constitute a propeptide, ER anchor for the capsid protein C, removed in mature form by serine protease NS3. The chain crosses the membrane as a helical span at residues 102–119 (VTMLLMLLPTALAFHLTT). Residues 120-242 (RGGEPTLIVS…QIQKVETWAL (123 aa)) are Extracellular-facing. A glycan (N-linked (GlcNAc...) asparagine; by host) is linked at Asn183. A helical membrane pass occupies residues 243–260 (RHPGFTVIGLFLAHAIGT). Residue Ser261 is a topological domain, cytoplasmic. The helical transmembrane segment at 262–280 (ITQKGIIFILLMLVTPSMA) threads the bilayer. The Extracellular portion of the chain corresponds to 281 to 725 (MRCVGIGNRD…IHQIFGTAYG (445 aa)). Disulfide bonds link Cys283–Cys310, Cys340–Cys401, Cys354–Cys385, and Cys372–Cys396. Asn347 is a glycosylation site (N-linked (GlcNAc...) asparagine; by host). The segment at 378-391 (DRGWGNGCGLFGKG) is fusion peptide. Asn433 carries an N-linked (GlcNAc...) asparagine; by host glycan. Intrachain disulfides connect Cys465–Cys565 and Cys582–Cys613. A helical transmembrane segment spans residues 726–746 (ILFSGVSWTMKIGIGILLTWL). At 747-752 (GLNSRS) the chain is on the cytoplasmic side. Residues 753–775 (TSLSMTCIAVGMVTLYLGVMVQA) traverse the membrane as a helical segment. Topologically, residues 776 to 791 (DSGCVINWKGKELKCG) are extracellular. Cys779 and Cys790 are joined by a disulfide.

As to quaternary structure, homodimer. Interacts (via N-terminus) with host EXOC1 (via C-terminus); this interaction results in EXOC1 degradation through the proteasome degradation pathway. Forms heterodimers with envelope protein E in the endoplasmic reticulum and Golgi. In terms of assembly, homodimer; in the endoplasmic reticulum and Golgi. Interacts with protein prM. Interacts with non-structural protein 1. As to quaternary structure, homodimer; Homohexamer when secreted. Interacts with envelope protein E. Specific enzymatic cleavages in vivo yield mature proteins. Cleavages in the lumen of endoplasmic reticulum are performed by host signal peptidase, wereas cleavages in the cytoplasmic side are performed by serine protease NS3. Signal cleavage at the 2K-4B site requires a prior NS3 protease-mediated cleavage at the 4A-2K site. In terms of processing, N-glycosylated. Post-translationally, N-glycosylated. The excreted form is glycosylated and this is required for efficient secretion of the protein from infected cells.

It localises to the virion. Its subcellular location is the host nucleus. It is found in the host cytoplasm. The protein resides in the host perinuclear region. The protein localises to the secreted. It localises to the virion membrane. Its subcellular location is the host endoplasmic reticulum membrane. Plays a role in virus budding by binding to the cell membrane and gathering the viral RNA into a nucleocapsid that forms the core of a mature virus particle. During virus entry, may induce genome penetration into the host cytoplasm after hemifusion induced by the surface proteins. Can migrate to the cell nucleus where it modulates host functions. Overcomes the anti-viral effects of host EXOC1 by sequestering and degrading the latter through the proteasome degradation pathway. Functionally, inhibits RNA silencing by interfering with host Dicer. Its function is as follows. Prevents premature fusion activity of envelope proteins in trans-Golgi by binding to envelope protein E at pH6.0. After virion release in extracellular space, gets dissociated from E dimers. In terms of biological role, acts as a chaperone for envelope protein E during intracellular virion assembly by masking and inactivating envelope protein E fusion peptide. prM is the only viral peptide matured by host furin in the trans-Golgi network probably to avoid catastrophic activation of the viral fusion activity in acidic GolGi compartment prior to virion release. prM-E cleavage is inefficient, and many virions are only partially matured. These uncleaved prM would play a role in immune evasion. May play a role in virus budding. Exerts cytotoxic effects by activating a mitochondrial apoptotic pathway through M ectodomain. May display a viroporin activity. Functionally, binds to host cell surface receptor and mediates fusion between viral and cellular membranes. Envelope protein is synthesized in the endoplasmic reticulum in the form of heterodimer with protein prM. They play a role in virion budding in the ER, and the newly formed immature particle is covered with 60 spikes composed of heterodimer between precursor prM and envelope protein E. The virion is transported to the Golgi apparatus where the low pH causes dissociation of PrM-E heterodimers and formation of E homodimers. prM-E cleavage is inefficient, and many virions are only partially matured. These uncleaved prM would play a role in immune evasion. Its function is as follows. Involved in immune evasion, pathogenesis and viral replication. Once cleaved off the polyprotein, is targeted to three destinations: the viral replication cycle, the plasma membrane and the extracellular compartment. Essential for viral replication. Required for formation of the replication complex and recruitment of other non-structural proteins to the ER-derived membrane structures. Excreted as a hexameric lipoparticle that plays a role against host immune response. Antagonizing the complement function. Binds to the host macrophages and dendritic cells. Inhibits signal transduction originating from Toll-like receptor 3 (TLR3). In terms of biological role, disrupts the host endothelial glycocalyx layer of host pulmonary microvascular endothelial cells, inducing degradation of sialic acid and shedding of heparan sulfate proteoglycans. NS1 induces expression of sialidases, heparanase, and activates cathepsin L, which activates heparanase via enzymatic cleavage. These effects are probably linked to the endothelial hyperpermeability observed in severe dengue disease. The sequence is that of Genome polyprotein from Dengue virus type 1 (strain Jamaica/CV1636/1977) (DENV-1).